The sequence spans 65 residues: Large ribosomal subunit protein bL35 (65 aa).

The segment at 1–30 (MPKMKTNRGAAKRFRKTASGRFKSKQSHLR) is disordered. Residues 10-30 (AAKRFRKTASGRFKSKQSHLR) show a composition bias toward basic residues.

Belongs to the bacterial ribosomal protein bL35 family.

This chain is Large ribosomal subunit protein bL35, found in Pseudoalteromonas atlantica (strain T6c / ATCC BAA-1087).